Consider the following 921-residue polypeptide: Protein translocase subunit SecA (921 aa).

Residues glutamine 87, 105-109 (GEGKT), and aspartate 515 each bind ATP. The segment at 872–901 (DMEVAGSTGDRGAALDIQPAPVRSGPKIGR) is disordered. Residues cysteine 905, cysteine 907, cysteine 916, and cysteine 917 each coordinate Zn(2+).

This sequence belongs to the SecA family. Monomer and homodimer. Part of the essential Sec protein translocation apparatus which comprises SecA, SecYEG and auxiliary proteins SecDF-YajC and YidC. Zn(2+) is required as a cofactor.

The protein resides in the cell inner membrane. Its subcellular location is the cytoplasm. It catalyses the reaction ATP + H2O + cellular proteinSide 1 = ADP + phosphate + cellular proteinSide 2.. Its function is as follows. Part of the Sec protein translocase complex. Interacts with the SecYEG preprotein conducting channel. Has a central role in coupling the hydrolysis of ATP to the transfer of proteins into and across the cell membrane, serving both as a receptor for the preprotein-SecB complex and as an ATP-driven molecular motor driving the stepwise translocation of polypeptide chains across the membrane. This is Protein translocase subunit SecA from Polynucleobacter asymbioticus (strain DSM 18221 / CIP 109841 / QLW-P1DMWA-1) (Polynucleobacter necessarius subsp. asymbioticus).